Consider the following 160-residue polypeptide: Phosphopantetheine adenylyltransferase (160 aa).

Residue Ser9 coordinates substrate. Residues 9 to 10 and His17 each bind ATP; that span reads SF. Residues Lys41, Thr73, and Arg87 each coordinate substrate. ATP is bound by residues 88–90, Glu98, and 123–129; these read GMR and YTFFSSS.

The protein belongs to the bacterial CoaD family. In terms of assembly, homohexamer. Mg(2+) serves as cofactor.

The protein localises to the cytoplasm. The catalysed reaction is (R)-4'-phosphopantetheine + ATP + H(+) = 3'-dephospho-CoA + diphosphate. The protein operates within cofactor biosynthesis; coenzyme A biosynthesis; CoA from (R)-pantothenate: step 4/5. Reversibly transfers an adenylyl group from ATP to 4'-phosphopantetheine, yielding dephospho-CoA (dPCoA) and pyrophosphate. This chain is Phosphopantetheine adenylyltransferase, found in Roseiflexus sp. (strain RS-1).